The sequence spans 261 residues: Hydroxyethylthiazole kinase (261 aa).

M38 serves as a coordination point for substrate. The ATP site is built by R114 and T159. Residue G186 coordinates substrate.

Belongs to the Thz kinase family. Requires Mg(2+) as cofactor.

It catalyses the reaction 5-(2-hydroxyethyl)-4-methylthiazole + ATP = 4-methyl-5-(2-phosphooxyethyl)-thiazole + ADP + H(+). The protein operates within cofactor biosynthesis; thiamine diphosphate biosynthesis; 4-methyl-5-(2-phosphoethyl)-thiazole from 5-(2-hydroxyethyl)-4-methylthiazole: step 1/1. Catalyzes the phosphorylation of the hydroxyl group of 4-methyl-5-beta-hydroxyethylthiazole (THZ). In Halalkalibacterium halodurans (strain ATCC BAA-125 / DSM 18197 / FERM 7344 / JCM 9153 / C-125) (Bacillus halodurans), this protein is Hydroxyethylthiazole kinase.